Reading from the N-terminus, the 220-residue chain is Meiotic nuclear division protein 1 homolog (220 aa).

A coiled-coil region spans residues serine 76 to cysteine 147.

Belongs to the MND1 family.

The protein localises to the nucleus. In terms of biological role, required for proper homologous chromosome pairing and efficient cross-over and intragenic recombination during meiosis. Stimulates both DMC1- and RAD51-mediated homologous strand assimilation, which is required for the resolution of meiotic double-strand breaks. The polypeptide is Meiotic nuclear division protein 1 homolog (Danio rerio (Zebrafish)).